We begin with the raw amino-acid sequence, 123 residues long: Guanine nucleotide exchange factor MSS4 (123 aa).

Met-1 is subject to N-acetylmethionine. An MSS4 domain is found at 9 to 123 (ELVSAEGRNR…YVALERVSHE (115 aa)). The Zn(2+) site is built by Cys-23, Cys-26, Cys-94, and Cys-97.

Belongs to the DSS4/MSS4 family. As to quaternary structure, interacts with RAB8A.

In terms of biological role, guanine-nucleotide-releasing protein that acts on members of the SEC4/YPT1/RAB subfamily. Stimulates GDP release from both YPT1, RAB3A and RAB10, but is less active on these proteins than on the SEC4 protein. Might play a general role in vesicular transport. This chain is Guanine nucleotide exchange factor MSS4, found in Mus musculus (Mouse).